The following is a 351-amino-acid chain: Sulfate/thiosulfate import ATP-binding protein CysA (351 aa).

The ABC transporter domain maps to 3-237 (ITVRNLHKRF…PRSAFVYEFL (235 aa)). 35–42 (GPSGCGKT) lines the ATP pocket.

Belongs to the ABC transporter superfamily. Sulfate/tungstate importer (TC 3.A.1.6) family. The complex is composed of two ATP-binding proteins (CysA), two transmembrane proteins (CysT and CysW) and a solute-binding protein (CysP).

The protein resides in the cell inner membrane. The catalysed reaction is sulfate(out) + ATP + H2O = sulfate(in) + ADP + phosphate + H(+). The enzyme catalyses thiosulfate(out) + ATP + H2O = thiosulfate(in) + ADP + phosphate + H(+). Its function is as follows. Part of the ABC transporter complex CysAWTP involved in sulfate/thiosulfate import. Responsible for energy coupling to the transport system. This Burkholderia pseudomallei (strain K96243) protein is Sulfate/thiosulfate import ATP-binding protein CysA.